The primary structure comprises 325 residues: Probable isoaspartyl peptidase/L-asparaginase GA20639 (325 aa).

Thr184 serves as the catalytic Nucleophile. Substrate contacts are provided by residues 212 to 215 (RIGD) and 235 to 238 (TGHG).

This sequence belongs to the Ntn-hydrolase family. In terms of assembly, heterodimer of an alpha and beta chain produced by autocleavage. In terms of processing, cleaved into an alpha and beta chain by autocatalysis; this activates the enzyme. The N-terminal residue of the beta subunit is responsible for the nucleophile hydrolase activity.

The enzyme catalyses L-asparagine + H2O = L-aspartate + NH4(+). The catalysed reaction is Cleavage of a beta-linked Asp residue from the N-terminus of a polypeptide.. In terms of biological role, has both L-asparaginase and beta-aspartyl peptidase activity. Does not have aspartylglucosaminidase activity and is inactive toward GlcNAc-L-Asn. Likewise, has no activity toward glutamine. This is Probable isoaspartyl peptidase/L-asparaginase GA20639 from Drosophila pseudoobscura pseudoobscura (Fruit fly).